A 417-amino-acid chain; its full sequence is Imidazolonepropionase (417 aa).

Fe(3+) contacts are provided by H80 and H82. H80 and H82 together coordinate Zn(2+). 4-imidazolone-5-propanoate-binding residues include R89, Y152, and H187. Residue Y152 participates in N-formimidoyl-L-glutamate binding. H252 serves as a coordination point for Fe(3+). H252 contacts Zn(2+). Position 255 (E255) interacts with 4-imidazolone-5-propanoate. D326 is a Fe(3+) binding site. Position 326 (D326) interacts with Zn(2+). Residues N328 and G330 each contribute to the N-formimidoyl-L-glutamate site. Residue S331 coordinates 4-imidazolone-5-propanoate.

It belongs to the metallo-dependent hydrolases superfamily. HutI family. Requires Zn(2+) as cofactor. Fe(3+) is required as a cofactor.

It is found in the cytoplasm. The enzyme catalyses 4-imidazolone-5-propanoate + H2O = N-formimidoyl-L-glutamate. Its pathway is amino-acid degradation; L-histidine degradation into L-glutamate; N-formimidoyl-L-glutamate from L-histidine: step 3/3. Catalyzes the hydrolytic cleavage of the carbon-nitrogen bond in imidazolone-5-propanoate to yield N-formimidoyl-L-glutamate. It is the third step in the universal histidine degradation pathway. In Bacteroides fragilis (strain YCH46), this protein is Imidazolonepropionase.